We begin with the raw amino-acid sequence, 250 residues long: MTDILIDDTATEAVRTLIRAFPLVPVSQPPEQGSYLLAEHDTVSLRLVGEKSNVIVDFTSGAAQYRRTKGGGELIAKAVNHTAHPTVWDATAGLGRDSFVLASLGLTVTAFEQHPAVACLLSDGIRRALLNPETQDTAARINLHFGNAAEQMPALVKTQGKPDIVYLDPMYPERRKSAAVKKEMAYFHRLVGEAQDEVILLHTARQTAKKRVVVKRPRLGEHLAGQAPAYQYTGKSTRFDVYLPYGADKG.

S-adenosyl-L-methionine contacts are provided by residues 96–97 (RD) and Asp168.

It belongs to the methyltransferase superfamily. RsmJ family.

The protein localises to the cytoplasm. It catalyses the reaction guanosine(1516) in 16S rRNA + S-adenosyl-L-methionine = N(2)-methylguanosine(1516) in 16S rRNA + S-adenosyl-L-homocysteine + H(+). In terms of biological role, specifically methylates the guanosine in position 1516 of 16S rRNA. The protein is Ribosomal RNA small subunit methyltransferase J of Neisseria gonorrhoeae (strain NCCP11945).